The primary structure comprises 359 residues: Peptide chain release factor 1 (359 aa).

Glutamine 235 is subject to N5-methylglutamine. The interval 287 to 312 (AQEASAMRSAQVGSGDRSERIRTYNF) is disordered.

It belongs to the prokaryotic/mitochondrial release factor family. In terms of processing, methylated by PrmC. Methylation increases the termination efficiency of RF1.

The protein resides in the cytoplasm. Functionally, peptide chain release factor 1 directs the termination of translation in response to the peptide chain termination codons UAG and UAA. This Chlamydia trachomatis serovar L2 (strain ATCC VR-902B / DSM 19102 / 434/Bu) protein is Peptide chain release factor 1.